The primary structure comprises 532 residues: Telomerase Cajal body protein 1 (532 aa).

Positions 1–48 are disordered; the sequence is MKTSEELRLAPDSLPSDLVPAPVLQASPADKNTDSEPVPPPCGGDDQL. Phosphoserine is present on residues serine 27, serine 61, and serine 83. Positions 83-115 are disordered; that stretch reads SPRIEEQEVPENASLPVEETNRPELESGEAMEG. WD repeat units follow at residues 151 to 190, 206 to 251, 256 to 297, 307 to 348, 349 to 389, and 395 to 434; these read RSEN…YSES, EGDT…LRAS, NHLD…RDCE, GQSG…ALLG, GHQG…HLLW, and VTTN…SDCK. Residue threonine 474 is modified to Phosphothreonine. Phosphoserine is present on serine 476. The disordered stretch occupies residues 505 to 532; that stretch reads CGGGPDPSNPDEDQDEKGQGRTEAVGMS.

This sequence belongs to the TCAB1 family. As to quaternary structure, component of the telomerase holoenzyme complex composed of one molecule of TERT, one molecule of WRAP53/TCAB1, two molecules of H/ACA ribonucleoprotein complex subunits DKC1, NOP10, NHP2 and GAR1, and a telomerase RNA template component (TERC). The telomerase holoenzyme complex is associated with TEP1, SMG6/EST1A and POT1. Interacts with the chaperonin-containing T-complex (TRiC) complex; which mediates the folding of WRAP53/TCAB1. Interacts with COIL. Interacts with SMN1. Interacts with RNF8. Interacts with histone H2AX. In terms of processing, phosphorylated at Ser-61 by ATM in response to DNA damage, promoting its interaction with histone H2AX and localization to sites of DNA double-strand breaks.

The protein resides in the nucleus. Its subcellular location is the cajal body. The protein localises to the chromosome. It is found in the telomere. Functionally, RNA chaperone that plays a key role in telomere maintenance and RNA localization to Cajal bodies. Specifically recognizes and binds the Cajal body box (CAB box) present in both small Cajal body RNAs (scaRNAs) and telomerase RNA template component (TERC). Essential component of the telomerase holoenzyme complex, a ribonucleoprotein complex essential for the replication of chromosome termini that elongates telomeres in most eukaryotes. In the telomerase holoenzyme complex, required to stimulate the catalytic activity of the complex. Acts by specifically binding the CAB box of the TERC RNA and controlling the folding of the CR4/CR5 region of the TERC RNA, a critical step for telomerase activity. In addition, also controls telomerase holoenzyme complex localization to Cajal body. During S phase, required for delivery of TERC to telomeres during S phase and for telomerase activity. In addition to its role in telomere maintenance, also required for Cajal body formation, probably by mediating localization of scaRNAs to Cajal bodies. Also plays a role in DNA repair: phosphorylated by ATM in response to DNA damage and relocalizes to sites of DNA double-strand breaks to promote the repair of DNA double-strand breaks. Acts by recruiting the ubiquitin ligase RNF8 to DNA breaks and promote both homologous recombination (HR) and non-homologous end joining (NHEJ). In Rattus norvegicus (Rat), this protein is Telomerase Cajal body protein 1.